The sequence spans 431 residues: Glycerol-3-phosphate dehydrogenase [NAD(P)+] (431 aa).

NADPH contacts are provided by S79, F80, R100, and K173. 2 residues coordinate sn-glycerol 3-phosphate: K173 and G201. An NADPH-binding site is contributed by A205. Sn-glycerol 3-phosphate is bound by residues K256, D309, S319, R320, and N321. K256 functions as the Proton acceptor in the catalytic mechanism. R320 is an NADPH binding site. Position 346 (E346) interacts with NADPH.

It belongs to the NAD-dependent glycerol-3-phosphate dehydrogenase family.

It localises to the cytoplasm. The enzyme catalyses sn-glycerol 3-phosphate + NAD(+) = dihydroxyacetone phosphate + NADH + H(+). The catalysed reaction is sn-glycerol 3-phosphate + NADP(+) = dihydroxyacetone phosphate + NADPH + H(+). The protein operates within membrane lipid metabolism; glycerophospholipid metabolism. In terms of biological role, catalyzes the reduction of the glycolytic intermediate dihydroxyacetone phosphate (DHAP) to sn-glycerol 3-phosphate (G3P), the key precursor for phospholipid synthesis. The chain is Glycerol-3-phosphate dehydrogenase [NAD(P)+] from Psychrobacter cryohalolentis (strain ATCC BAA-1226 / DSM 17306 / VKM B-2378 / K5).